Consider the following 500-residue polypeptide: Glycerol kinase (500 aa).

Thr13 contacts ADP. Positions 13, 14, and 15 each coordinate ATP. Position 13 (Thr13) interacts with sn-glycerol 3-phosphate. Position 17 (Arg17) interacts with ADP. Sn-glycerol 3-phosphate contacts are provided by Arg83, Glu84, Tyr135, and Asp244. Glycerol is bound by residues Arg83, Glu84, Tyr135, Asp244, and Gln245. ADP-binding residues include Thr266 and Gly309. Thr266, Gly309, Gln313, and Gly410 together coordinate ATP. ADP contacts are provided by Gly410 and Asn414.

The protein belongs to the FGGY kinase family.

The catalysed reaction is glycerol + ATP = sn-glycerol 3-phosphate + ADP + H(+). The protein operates within polyol metabolism; glycerol degradation via glycerol kinase pathway; sn-glycerol 3-phosphate from glycerol: step 1/1. Its activity is regulated as follows. Inhibited by fructose 1,6-bisphosphate (FBP). Functionally, key enzyme in the regulation of glycerol uptake and metabolism. Catalyzes the phosphorylation of glycerol to yield sn-glycerol 3-phosphate. The polypeptide is Glycerol kinase (Burkholderia vietnamiensis (strain G4 / LMG 22486) (Burkholderia cepacia (strain R1808))).